A 1342-amino-acid chain; its full sequence is DNA-directed RNA polymerase subunit beta (1342 aa).

This sequence belongs to the RNA polymerase beta chain family. In terms of assembly, the RNAP catalytic core consists of 2 alpha, 1 beta, 1 beta' and 1 omega subunit. When a sigma factor is associated with the core the holoenzyme is formed, which can initiate transcription.

It carries out the reaction RNA(n) + a ribonucleoside 5'-triphosphate = RNA(n+1) + diphosphate. Functionally, DNA-dependent RNA polymerase catalyzes the transcription of DNA into RNA using the four ribonucleoside triphosphates as substrates. This chain is DNA-directed RNA polymerase subunit beta, found in Salmonella typhimurium (strain LT2 / SGSC1412 / ATCC 700720).